The chain runs to 341 residues: D-erythrose-4-phosphate dehydrogenase (341 aa).

12-13 (RI) is a binding site for NAD(+). Substrate-binding positions include 154-156 (SCT), R200, 213-214 (TK), and R236. Catalysis depends on C155, which acts as the Nucleophile. Position 318 (N318) interacts with NAD(+).

The protein belongs to the glyceraldehyde-3-phosphate dehydrogenase family. Epd subfamily. In terms of assembly, homotetramer.

Its subcellular location is the cytoplasm. It catalyses the reaction D-erythrose 4-phosphate + NAD(+) + H2O = 4-phospho-D-erythronate + NADH + 2 H(+). Its pathway is cofactor biosynthesis; pyridoxine 5'-phosphate biosynthesis; pyridoxine 5'-phosphate from D-erythrose 4-phosphate: step 1/5. Functionally, catalyzes the NAD-dependent conversion of D-erythrose 4-phosphate to 4-phosphoerythronate. The sequence is that of D-erythrose-4-phosphate dehydrogenase from Edwardsiella ictaluri (strain 93-146).